The chain runs to 549 residues: uncharacterized protein (549 aa).

12 helical membrane-spanning segments follow: residues 27–47, 108–128, 146–166, 197–217, 233–253, 265–285, 308–328, 352–372, 399–419, 434–454, 472–492, and 501–521; these read ILRF…YVFV, PIVV…GVIF, TGLV…LAIA, AVAI…IPML, FIAI…FLLV, VAAI…LISL, FLVI…LSIL, LVLL…IFGV, TLLV…VGLG, LMLA…VAIG, IVSL…FQAI, and IFIW…VLIG.

The protein resides in the cell membrane. This is an uncharacterized protein from Mycoplasma pneumoniae (strain ATCC 29342 / M129 / Subtype 1) (Mycoplasmoides pneumoniae).